We begin with the raw amino-acid sequence, 209 residues long: ATP-dependent Clp protease proteolytic subunit (209 aa).

S106 functions as the Nucleophile in the catalytic mechanism. Residue H131 is part of the active site.

This sequence belongs to the peptidase S14 family. Fourteen ClpP subunits assemble into 2 heptameric rings which stack back to back to give a disk-like structure with a central cavity, resembling the structure of eukaryotic proteasomes.

It localises to the cytoplasm. The catalysed reaction is Hydrolysis of proteins to small peptides in the presence of ATP and magnesium. alpha-casein is the usual test substrate. In the absence of ATP, only oligopeptides shorter than five residues are hydrolyzed (such as succinyl-Leu-Tyr-|-NHMec, and Leu-Tyr-Leu-|-Tyr-Trp, in which cleavage of the -Tyr-|-Leu- and -Tyr-|-Trp bonds also occurs).. Its function is as follows. Cleaves peptides in various proteins in a process that requires ATP hydrolysis. Has a chymotrypsin-like activity. Plays a major role in the degradation of misfolded proteins. The protein is ATP-dependent Clp protease proteolytic subunit of Brucella canis (strain ATCC 23365 / NCTC 10854 / RM-666).